The following is a 575-amino-acid chain: MRPWTGSWRWIMLILFAWGTLLFYIGGHLVRDNDHSDHSSRELSKILAKLERLKQQNEDLRRMAESLRIPEGPIDQGPASGRVRALEEQFMKAKEQIENYKKQTKNGPGKDHEILRRRIENGAKELWFFLQSELKKLKNLEGNELQRHADEFLSDLGHHERSIMTDLYYLSQTDGAGDWREKEAKDLTELVQRRITYLQNPKDCSKAKKLVCNINKGCGYGCQLHHVVYCFMIAYGTQRTLALESHNWRYATGGWETVFRPVSETCTDRSGSSTGHWSGEVKDKNVQVVELPIVDSVHPRPPYLPLAVPEDLADRLVRVHGDPAVWWVSQFVKYLIRPQPWLEKEIEEATKKLGFKHPVIGVHVRRTDKVGAEAAFHPIEEYTVHVEEDFQLLARRMQVDKKRVYLATDDPALLKEAKTKYPSYEFISDNSISWSAGLHNRYTENSLRGVILDIHFLSQADFLVCTFSSQVCRVAYEIMQALHPDASANFRSLDDIYYFGGPNAHNQIAIYPHQPRTEGEIPMEPGDIIGVAGNHWDGYPKGVNRKLGRTGLYPSYKVREKIETVKYPTYPEADK.

Residues 1–9 are Cytoplasmic-facing; sequence MRPWTGSWR. Residues 10 to 30 form a helical; Signal-anchor for type II membrane protein membrane-spanning segment; it reads WIMLILFAWGTLLFYIGGHLV. The Lumenal segment spans residues 31–575; it reads RDNDHSDHSS…KYPTYPEADK (545 aa). Disulfide bonds link cysteine 204-cysteine 266, cysteine 212-cysteine 230, and cysteine 218-cysteine 222. The GT23 domain maps to 206 to 493; sequence KAKKLVCNIN…PDASANFRSL (288 aa). Serine 278 carries the phosphoserine modification. The SH3-binding motif lies at 299–305; the sequence is PRPPYLP. Residues 365–366 form an important for donor substrate binding region; it reads RR. Cysteine 465 and cysteine 472 are joined by a disulfide. The SH3 domain maps to 502–563; that stretch reads PNAHNQIAIY…PSYKVREKIE (62 aa).

Belongs to the glycosyltransferase 23 family. In terms of processing, tyrosine phosphorylated by PKDCC/VLK. In terms of tissue distribution, highest expression in brain.

The protein localises to the golgi apparatus. The protein resides in the golgi stack membrane. It carries out the reaction N(4)-{beta-D-GlcNAc-(1-&gt;2)-alpha-D-Man-(1-&gt;3)-[beta-D-GlcNAc-(1-&gt;2)-alpha-D-Man-(1-&gt;6)]-beta-D-Man-(1-&gt;4)-beta-D-GlcNAc-(1-&gt;4)-beta-D-GlcNAc}-L-asparaginyl-[protein] + GDP-beta-L-fucose = an N(4)-{beta-D-GlcNAc-(1-&gt;2)-alpha-D-Man-(1-&gt;3)-[beta-D-GlcNAc-(1-&gt;2)-alpha-D-Man-(1-&gt;6)]-beta-D-Man-(1-&gt;4)-beta-D-GlcNAc-(1-&gt;4)-[alpha-L-Fuc-(1-&gt;6)]-beta-D-GlcNAc}-L-asparaginyl-[protein] + GDP + H(+). Its pathway is protein modification; protein glycosylation. Its function is as follows. Catalyzes the addition of fucose in alpha 1-6 linkage to the first GlcNAc residue, next to the peptide chains in N-glycans. This Sus scrofa (Pig) protein is Alpha-(1,6)-fucosyltransferase (FUT8).